Reading from the N-terminus, the 333-residue chain is HPr kinase/phosphorylase (333 aa).

Catalysis depends on residues H155 and K176. 170–177 (GKSGLGKS) lines the ATP pocket. S177 provides a ligand contact to Mg(2+). D194 functions as the Proton acceptor; for phosphorylation activity. Proton donor; for dephosphorylation activity in the catalytic mechanism. An important for the catalytic mechanism of both phosphorylation and dephosphorylation region spans residues 219–228 (MEIRGLGVVD). Position 220 (E220) interacts with Mg(2+). R261 is an active-site residue. The segment at 282 to 287 (PILPGK) is important for the catalytic mechanism of dephosphorylation.

The protein belongs to the HPrK/P family. As to quaternary structure, homohexamer. The cofactor is Mg(2+).

The catalysed reaction is [HPr protein]-L-serine + ATP = [HPr protein]-O-phospho-L-serine + ADP + H(+). It catalyses the reaction [HPr protein]-O-phospho-L-serine + phosphate + H(+) = [HPr protein]-L-serine + diphosphate. Its function is as follows. Catalyzes the ATP- as well as the pyrophosphate-dependent phosphorylation of a specific serine residue in HPr, a phosphocarrier protein of the phosphoenolpyruvate-dependent sugar phosphotransferase system (PTS). HprK/P also catalyzes the pyrophosphate-producing, inorganic phosphate-dependent dephosphorylation (phosphorolysis) of seryl-phosphorylated HPr (P-Ser-HPr). The chain is HPr kinase/phosphorylase from Chlorobium chlorochromatii (strain CaD3).